The primary structure comprises 205 residues: Ras-related protein Rab-1A (205 aa).

Residues 18 to 26 (GDSGVGKSC), 36 to 43 (YTESYIST), 66 to 70 (DTAGQ), 124 to 127 (NKSD), and 154 to 156 (SAK) each bind GTP. The Effector region motif lies at 40-48 (YISTIGVDF). Over residues 183–198 (SDSKPSVKINSSTPVS) the composition is skewed to polar residues. The segment at 183 to 205 (SDSKPSVKINSSTPVSANKGGCC) is disordered. Residues Cys-204 and Cys-205 are each lipidated (S-geranylgeranyl cysteine).

This sequence belongs to the small GTPase superfamily. Rab family.

Its subcellular location is the golgi apparatus. The protein resides in the endoplasmic reticulum. Probably required for transit of protein from the ER through Golgi compartment. The sequence is that of Ras-related protein Rab-1A (RAB1A) from Lymnaea stagnalis (Great pond snail).